Consider the following 579-residue polypeptide: MFS-type transporter sphD (579 aa).

Positions 17 to 62 are disordered; the sequence is SAFAVRAEPDSEPVSEKQGTAETDAETGAGGTEVPAERNGEDDVER. Residues 51-62 show a composition bias toward basic and acidic residues; it reads PAERNGEDDVER. 8 consecutive transmembrane segments (helical) span residues 73-93, 110-130, 138-158, 168-188, 200-220, 227-247, 267-287, and 294-314; these read AFIGLAASMFVFQVDATALGI, FWANLSYTLCGLVMQPVWASI, PPLYVSMALFFIGSIVFAVAQ, VLQGFGGGGIDVLAEVILADM, LMAIPMAIGNIMGPSVGALFA, WIGWVNLPLLGIGTPLVFFFL, WIGMVLVVVGITIFVLPLSWA, and GAWQTLVPLFLGVAVLVIFAF. The N-linked (GlcNAc...) asparagine glycan is linked to N335. The next 6 membrane-spanning stretches (helical) occupy residues 338 to 358, 367 to 391, 398 to 419, 429 to 449, 460 to 480, and 541 to 561; these read LVGGFLHGAVLVSLLQYLPLI, AILSAVSLLPTVIISVVVAAISMML, YVWILRLAWVILTLGTGLLALF, LGLPILWGAGVALLRLNLLPM, GLAIGQFLTIRMFGGLVGLTI, and FQTIFYTMTGLSGLGLVTSLF.

Belongs to the major facilitator superfamily.

The protein resides in the membrane. MFS-type transporter; part of the gene cluster that mediates the biosynthesis of sphingofungins, bioactive molecules acting as sphingolipid inhibitors via inhibiting serine palmitoyl transferase (SPT). This Aspergillus fumigatus (strain CBS 144.89 / FGSC A1163 / CEA10) (Neosartorya fumigata) protein is MFS-type transporter sphD.